We begin with the raw amino-acid sequence, 879 residues long: Metabotropic glutamate receptor 3 (879 aa).

An N-terminal signal peptide occupies residues 1–22 (MKMLTRLQVLMLALFSKGFLVS). The Extracellular portion of the chain corresponds to 23-576 (LGDHNFMRRE…EDYIRWEDAW (554 aa)). The cysteines at positions 57 and 99 are disulfide-linked. L-glutamate is bound by residues Ser151 and 172–174 (AST). A glycan (N-linked (GlcNAc...) asparagine) is linked at Asn209. Residue Tyr222 participates in L-glutamate binding. 7 disulfides stabilise this stretch: Cys240-Cys527, Cys361-Cys373, Cys412-Cys419, Cys509-Cys528, Cys513-Cys531, Cys534-Cys546, and Cys549-Cys562. Asn292 carries an N-linked (GlcNAc...) asparagine glycan. Residue Asp301 coordinates L-glutamate. Lys389 is a binding site for L-glutamate. N-linked (GlcNAc...) asparagine glycans are attached at residues Asn414 and Asn439. Residues 577-599 (AIGPVTIACLGFMCTCIVITVFI) form a helical membrane-spanning segment. Topologically, residues 600–613 (KHNNTPLVKASGRE) are cytoplasmic. A helical transmembrane segment spans residues 614–634 (LCYILLFGVSLSYCMTFFFIA). Over 635–645 (KPSPVICALRR) the chain is Extracellular. Residues 646–664 (LGLGTSFAICYSALLTKTN) traverse the membrane as a helical segment. Over 665–688 (CIARIFDGVKNGAQRPKFISPSSQ) the chain is Cytoplasmic. The helical transmembrane segment at 689 to 709 (VFICLGLILVQIVMVSVWLIL) threads the bilayer. Topologically, residues 710 to 734 (ETPGTRRYTLPEKRETVILKCNVKD) are extracellular. Residues 735–756 (SSMLISLTYDVVLVILCTVYAF) form a helical membrane-spanning segment. Residues 757 to 769 (KTRKCPENFNEAK) lie on the Cytoplasmic side of the membrane. A helical transmembrane segment spans residues 770–792 (FIGFTMYTTCIIWLAFLPIFYVT). At 793–802 (SSDYRVQTTT) the chain is on the extracellular side. Residues 803–828 (MCISVSLSGFVVLGCLFAPKVHIVLF) form a helical membrane-spanning segment. Topologically, residues 829–879 (QPQKNVVTHRLHLNRFSVSGTATTYSQSSASTYVPTVCNGREVLDSTTSSL) are cytoplasmic.

It belongs to the G-protein coupled receptor 3 family. In terms of assembly, interacts with TAMALIN.

The protein resides in the cell membrane. G-protein coupled receptor for glutamate. Ligand binding causes a conformation change that triggers signaling via guanine nucleotide-binding proteins (G proteins) and modulates the activity of down-stream effectors. Signaling inhibits adenylate cyclase activity. The chain is Metabotropic glutamate receptor 3 (Grm3) from Mus musculus (Mouse).